A 341-amino-acid chain; its full sequence is D-aspartate oxidase (341 aa).

A Blocked amino end (Met) modification is found at Met-1. FAD contacts are provided by Asp-36, Lys-37, Thr-43, Ser-44, Met-50, Gly-307, and Ile-311. The short motif at 339–341 (SKL) is the Microbody targeting signal element.

It belongs to the DAMOX/DASOX family. In terms of assembly, monomer. Interacts with PEX5; the interaction is direct and required for localization of DDO to the peroxisome. It depends on FAD as a cofactor. In the kidney, expressed in epithelial cells of the proximal tubules and in the liver (at protein level).

It localises to the peroxisome matrix. It is found in the cytoplasm. The protein resides in the cytosol. The catalysed reaction is D-aspartate + O2 + H2O = oxaloacetate + H2O2 + NH4(+). It catalyses the reaction D-glutamate + O2 + H2O = H2O2 + 2-oxoglutarate + NH4(+). Inhibited by phenylglyoxal; chemical modification of arginine residues in the enzyme with phenylglyoxal leads to the irreversible loss of activity towards dicarboxylic D-amino acids, paralleled by a transient appearance of activity versus monocarboxylic ones. Selectively catalyzes the oxidative deamination of acidic amino acids. Suppresses the level of D-aspartate in the brain, an amino acid that can act as an agonist for glutamate receptors. Protects the organism from the toxicity of D-amino acids. May also function in the intestine. This chain is D-aspartate oxidase (DDO), found in Bos taurus (Bovine).